A 424-amino-acid polypeptide reads, in one-letter code: Calreticulin-3 (424 aa).

Residues 1–28 (MGLPQNKLSFFCFFFLVSVLTLAPLAFS) form the signal peptide. Asn-97 carries an N-linked (GlcNAc...) asparagine glycan. A disulfide bond links Cys-114 and Cys-146. Residues Tyr-118, Lys-120, Tyr-137, and Asp-144 each coordinate an alpha-D-glucoside. 7 repeat units span residues 200 to 211 (REFGSMYTDWDI), 219 to 230 (VKNAKKPEDWDD), 236 to 247 (DPNDVKPEGFDS), 254 to 265 (DRKAKEPEDWDE), 269 to 279 (GLWEPPKIPNS), 283 to 293 (GPWKAKRIKNP), and 297 to 307 (GKWKNPWIDNP). A 4 X approximate repeats region spans residues 200-265 (REFGSMYTDW…KAKEPEDWDE (66 aa)). The span at 228 to 237 (WDDREYIDDP) shows a compositional bias: acidic residues. Positions 228-275 (WDDREYIDDPNDVKPEGFDSIPREIPDRKAKEPEDWDEEENGLWEPPK) are disordered. Residues 238-260 (NDVKPEGFDSIPREIPDRKAKEP) show a composition bias toward basic and acidic residues. Residues 269–307 (GLWEPPKIPNSAYKGPWKAKRIKNPNYKGKWKNPWIDNP) are 3 X approximate repeats. Residue Glu-327 participates in an alpha-D-glucoside binding. The segment covering 368–401 (FAEAEKERKAREDEEARIAREEGERRRKERDHRY) has biased composition (basic and acidic residues). Positions 368–424 (FAEAEKERKAREDEEARIAREEGERRRKERDHRYGDRRRRYKRPNPRDYMDDYHDEL) are disordered. Positions 402–411 (GDRRRRYKRP) are enriched in basic residues. A compositionally biased stretch (basic and acidic residues) spans 412–424 (NPRDYMDDYHDEL). Positions 421-424 (HDEL) match the Prevents secretion from ER motif.

The protein belongs to the calreticulin family.

Its subcellular location is the endoplasmic reticulum lumen. Molecular calcium-binding chaperone promoting folding, oligomeric assembly and quality control in the ER via the calreticulin/calnexin cycle. This lectin may interact transiently with almost all of the monoglucosylated glycoproteins that are synthesized in the ER. Required for elongation factor Tu receptor (EFR) accumulation and for EFR, but not flagellin-sensing 2 (FLS2) signaling. The polypeptide is Calreticulin-3 (CRT3) (Arabidopsis thaliana (Mouse-ear cress)).